Consider the following 318-residue polypeptide: Aldo-keto reductase family 1 member C21 (318 aa).

20 to 24 (GFGTA) contributes to the NADP(+) binding site. Lys31 contributes to the substrate binding site. Asp50 provides a ligand contact to NADP(+). Tyr55 serves as the catalytic Proton donor. His117 contacts substrate. NADP(+) is bound by residues 166–167 (SN), Gln190, 216–224 (YGVLGTQRY), and 270–280 (TSLKEERIKEN).

The protein belongs to the aldo/keto reductase family. As to quaternary structure, monomer.

The protein resides in the cytoplasm. The catalysed reaction is androsterone + NADP(+) = 5alpha-androstan-3,17-dione + NADPH + H(+). It catalyses the reaction androsterone + NAD(+) = 5alpha-androstan-3,17-dione + NADH + H(+). NADP-dependent 17-alpha-hydroxysteroid dehydrogenase that converts 5-alpha-androstane-3,17-dione into androsterone. Has lower 3-alpha-hydroxysteroid dehydrogenase activity. Has broad substrate specificity and acts on various 17-alpha-hydroxysteroids, 17-ketosteroids, 3-alpha hydroxysteroids and 3-ketosteroids. Reduction of keto groups is strictly stereoselective. Reduction of 17-ketosteroids yields only 17-alpha-hydroxysteroids. Likewise, reduction of 3-ketosteroids yields only 3-alpha-hydroxysteroids. This is Aldo-keto reductase family 1 member C21 (Akr1c21) from Rattus norvegicus (Rat).